Here is a 303-residue protein sequence, read N- to C-terminus: Aspartate carbamoyltransferase catalytic subunit (303 aa).

Residues Arg54 and Thr55 each contribute to the carbamoyl phosphate site. Residue Lys82 participates in L-aspartate binding. Positions 104, 132, and 135 each coordinate carbamoyl phosphate. L-aspartate contacts are provided by Arg165 and Arg221. The carbamoyl phosphate site is built by Gly261 and Pro262.

This sequence belongs to the aspartate/ornithine carbamoyltransferase superfamily. ATCase family. As to quaternary structure, heterododecamer (2C3:3R2) of six catalytic PyrB chains organized as two trimers (C3), and six regulatory PyrI chains organized as three dimers (R2).

It catalyses the reaction carbamoyl phosphate + L-aspartate = N-carbamoyl-L-aspartate + phosphate + H(+). It functions in the pathway pyrimidine metabolism; UMP biosynthesis via de novo pathway; (S)-dihydroorotate from bicarbonate: step 2/3. Catalyzes the condensation of carbamoyl phosphate and aspartate to form carbamoyl aspartate and inorganic phosphate, the committed step in the de novo pyrimidine nucleotide biosynthesis pathway. The polypeptide is Aspartate carbamoyltransferase catalytic subunit (Koribacter versatilis (strain Ellin345)).